Reading from the N-terminus, the 602-residue chain is Elongation factor 4 (602 aa).

Positions 7 to 189 (ARLRNFCIIA…SVVDRIPPPK (183 aa)) constitute a tr-type G domain. GTP contacts are provided by residues 19–24 (DHGKST) and 136–139 (NKVD).

The protein belongs to the TRAFAC class translation factor GTPase superfamily. Classic translation factor GTPase family. LepA subfamily.

The protein localises to the cell inner membrane. It carries out the reaction GTP + H2O = GDP + phosphate + H(+). Required for accurate and efficient protein synthesis under certain stress conditions. May act as a fidelity factor of the translation reaction, by catalyzing a one-codon backward translocation of tRNAs on improperly translocated ribosomes. Back-translocation proceeds from a post-translocation (POST) complex to a pre-translocation (PRE) complex, thus giving elongation factor G a second chance to translocate the tRNAs correctly. Binds to ribosomes in a GTP-dependent manner. This is Elongation factor 4 from Prochlorococcus marinus (strain SARG / CCMP1375 / SS120).